We begin with the raw amino-acid sequence, 44 residues long: Defensin ARD1 (44 aa).

3 cysteine pairs are disulfide-bonded: C7-C32, C18-C40, and C22-C42.

It is found in the secreted. Its function is as follows. Possesses potent anti-fungal activity. The sequence is that of Defensin ARD1 from Archaeoprepona demophon (One-spotted leafwing butterfly).